Here is a 794-residue protein sequence, read N- to C-terminus: uncharacterized protein (794 aa).

The next 9 membrane-spanning stretches (helical) occupy residues 34 to 54 (FSAS…VFAV), 67 to 87 (ITAA…AHLI), 99 to 119 (MLAD…AFAS), 132 to 152 (LFLF…ADVT), 257 to 277 (VGPS…AMGL), 283 to 303 (LAWI…MFQL), 315 to 335 (WSVN…VLVF), 353 to 373 (LGAL…ATLF), and 421 to 441 (WTGT…LMGV).

The protein resides in the cell membrane. This is an uncharacterized protein from Corynebacterium glutamicum (strain ATCC 13032 / DSM 20300 / JCM 1318 / BCRC 11384 / CCUG 27702 / LMG 3730 / NBRC 12168 / NCIMB 10025 / NRRL B-2784 / 534).